The sequence spans 100 residues: Urease subunit gamma (100 aa).

The protein belongs to the urease gamma subunit family. Heterotrimer of UreA (gamma), UreB (beta) and UreC (alpha) subunits. Three heterotrimers associate to form the active enzyme.

It localises to the cytoplasm. It carries out the reaction urea + 2 H2O + H(+) = hydrogencarbonate + 2 NH4(+). The protein operates within nitrogen metabolism; urea degradation; CO(2) and NH(3) from urea (urease route): step 1/1. This Laribacter hongkongensis (strain HLHK9) protein is Urease subunit gamma.